The following is a 239-amino-acid chain: Small ribosomal subunit protein uS3c (239 aa).

In terms of domain architecture, KH type-2 spans 43–139 (IKNYIQKNRK…RFNISIEKVK (97 aa)). Positions 50–74 (NRKKGSNRKIESDSSSEVITHNRKM) are disordered.

This sequence belongs to the universal ribosomal protein uS3 family. As to quaternary structure, part of the 30S ribosomal subunit.

The protein resides in the plastid. The protein localises to the chloroplast. In Hordeum vulgare (Barley), this protein is Small ribosomal subunit protein uS3c (rps3).